A 355-amino-acid polypeptide reads, in one-letter code: MDRVASQIYSGALPYITTMDMEDRLRNRIAAKAGAKFFKACFEAVVADKSGLFVLSGGAATACHIGDDRNVLKCLDFDYYNATQEWLQLARLQQRLQACVQDNLEILSRLAQSVRMQDDLFVVKCFQNGAFCFNGPVQARLVPCVETVRTSFNGEFDLLRFALQVELKALNGVDEYVDQKVIVDRGAAVFNVFFVNIRAMKGPLTMERCVRTLAVFGDAYRVVVSPLQSVINDQIMCLLKDIFTDKPEFRVARPKALICALFAKLPREAYDECINSHHGAEPTRRRDETVTSFCRRTLHIHGPALGCRKLVYAYFKTDSFARQMPDYVANRAIYPHTDCEMKWKEFIHFFVVAKV.

Functionally, this protein is required for viral late gene expression. The chain is Putative early 40.3 kDa protein (DA41) from Orgyia pseudotsugata multicapsid polyhedrosis virus (OpMNPV).